Here is a 213-residue protein sequence, read N- to C-terminus: Orotate phosphoribosyltransferase (213 aa).

Lys-26 serves as a coordination point for 5-phospho-alpha-D-ribose 1-diphosphate. 34-35 (FF) lines the orotate pocket. 5-phospho-alpha-D-ribose 1-diphosphate contacts are provided by residues 72–73 (YK), Arg-99, Lys-100, Lys-103, His-105, and 124–132 (DDVITAGTA). Orotate contacts are provided by Thr-128 and Arg-156.

This sequence belongs to the purine/pyrimidine phosphoribosyltransferase family. PyrE subfamily. As to quaternary structure, homodimer. It depends on Mg(2+) as a cofactor.

The catalysed reaction is orotidine 5'-phosphate + diphosphate = orotate + 5-phospho-alpha-D-ribose 1-diphosphate. The protein operates within pyrimidine metabolism; UMP biosynthesis via de novo pathway; UMP from orotate: step 1/2. In terms of biological role, catalyzes the transfer of a ribosyl phosphate group from 5-phosphoribose 1-diphosphate to orotate, leading to the formation of orotidine monophosphate (OMP). The polypeptide is Orotate phosphoribosyltransferase (Pseudomonas putida (strain W619)).